The primary structure comprises 216 residues: Sporozoite antigen (216 aa).

Positions 194–216 (QQQQPSSYGAPPASSQQPSGFFW) are disordered.

This chain is Sporozoite antigen, found in Eimeria tenella (Coccidian parasite).